A 721-amino-acid chain; its full sequence is mRNA (2'-O-methyladenosine-N(6)-)-methyltransferase (721 aa).

Composition is skewed to polar residues over residues 1 to 10 (MTSENHTTIK) and 19 to 36 (PTGS…TSKP). Positions 1 to 37 (MTSENHTTIKADSALVMSPTGSTSQAAPFSPSTSKPI) are disordered. The WW domain maps to 43–77 (ELIQAGWSKCWSKRENRPYYFNRFTNQSLWEMPVL). Residues 93–170 (PASGEANADA…KQGQASTPAP (78 aa)) form a disordered region. Positions 132–148 (IPATPTTPTVPISPSTP) are enriched in low complexity. Positions 239 and 269 each coordinate substrate. 558–561 (NPPF) serves as a coordination point for S-adenosyl-L-methionine. Residues Glu563 and 593–597 (WRDPP) contribute to the substrate site. 619-621 (FEH) is an S-adenosyl-L-methionine binding site. The segment covering 675–686 (SGRSLPSPGPSS) has biased composition (low complexity). The disordered stretch occupies residues 675–721 (SGRSLPSPGPSSTNTGEKDSKPAPERTAPSQDNSSPVDKTAQDTTNT). A compositionally biased stretch (polar residues) spans 702-721 (APSQDNSSPVDKTAQDTTNT).

The protein belongs to the CAPAM family.

The protein resides in the nucleus. It catalyses the reaction a 5'-end (N(7)-methyl 5'-triphosphoguanosine)-(2'-O-methyladenosine) in mRNA + S-adenosyl-L-methionine = a 5'-end (N(7)-methyl 5'-triphosphoguanosine)-(N(6),2'-O-dimethyladenosine) in mRNA + S-adenosyl-L-homocysteine + H(+). Cap-specific adenosine methyltransferase activity is inhibited by zinc. Cap-specific adenosine methyltransferase that catalyzes formation of N(6),2'-O-dimethyladenosine cap (m6A(m)) by methylating the adenosine at the second transcribed position of capped mRNAs. This Danio rerio (Zebrafish) protein is mRNA (2'-O-methyladenosine-N(6)-)-methyltransferase (pcif1).